Reading from the N-terminus, the 97-residue chain is Conotoxin Cal6.1e (97 aa).

The signal sequence occupies residues 1–22 (MKLTTVLIVAVLVLAACQFTVT). The tract at residues 23-49 (DNSGDDTENPSLRSAGENQNPDSTKTI) is disordered. A propeptide spanning residues 23-60 (DNSGDDTENPSLRSAGENQNPDSTKTITARATRARTNM) is cleaved from the precursor. Polar residues predominate over residues 31–45 (NPSLRSAGENQNPDS). 3 cysteine pairs are disulfide-bonded: Cys71/Cys87, Cys78/Cys91, and Cys86/Cys96.

The protein belongs to the conotoxin O1 superfamily. In terms of tissue distribution, expressed by the venom duct.

It localises to the secreted. Probable neurotoxin with unknown target. Possibly targets ion channels. This Californiconus californicus (California cone) protein is Conotoxin Cal6.1e.